The sequence spans 278 residues: 4-diphosphocytidyl-2-C-methyl-D-erythritol kinase (278 aa).

Residue Lys-9 is part of the active site. 93–103 contributes to the ATP binding site; sequence PLGGGLGGGSS. Asp-135 is an active-site residue.

Belongs to the GHMP kinase family. IspE subfamily.

The catalysed reaction is 4-CDP-2-C-methyl-D-erythritol + ATP = 4-CDP-2-C-methyl-D-erythritol 2-phosphate + ADP + H(+). Its pathway is isoprenoid biosynthesis; isopentenyl diphosphate biosynthesis via DXP pathway; isopentenyl diphosphate from 1-deoxy-D-xylulose 5-phosphate: step 3/6. Functionally, catalyzes the phosphorylation of the position 2 hydroxy group of 4-diphosphocytidyl-2C-methyl-D-erythritol. This Nitrosomonas europaea (strain ATCC 19718 / CIP 103999 / KCTC 2705 / NBRC 14298) protein is 4-diphosphocytidyl-2-C-methyl-D-erythritol kinase.